A 529-amino-acid chain; its full sequence is Peptide chain release factor 3 (529 aa).

Residues 11-280 form the tr-type G domain; sequence SKRRTFAIIS…GLTDWAPAPL (270 aa). GTP-binding positions include 20 to 27, 88 to 92, and 142 to 145; these read SHPDAGKT, DTPGH, and NKLD.

It belongs to the TRAFAC class translation factor GTPase superfamily. Classic translation factor GTPase family. PrfC subfamily.

It is found in the cytoplasm. Increases the formation of ribosomal termination complexes and stimulates activities of RF-1 and RF-2. It binds guanine nucleotides and has strong preference for UGA stop codons. It may interact directly with the ribosome. The stimulation of RF-1 and RF-2 is significantly reduced by GTP and GDP, but not by GMP. This is Peptide chain release factor 3 from Vibrio vulnificus (strain YJ016).